Here is a 156-residue protein sequence, read N- to C-terminus: Ribosome maturation factor RimP (156 aa).

The protein belongs to the RimP family.

It is found in the cytoplasm. Its function is as follows. Required for maturation of 30S ribosomal subunits. The protein is Ribosome maturation factor RimP of Exiguobacterium sp. (strain ATCC BAA-1283 / AT1b).